Consider the following 214-residue polypeptide: ATP-dependent Clp protease proteolytic subunit 3 (214 aa).

The Nucleophile role is filled by serine 106. Residue histidine 131 is part of the active site.

Belongs to the peptidase S14 family. Fourteen ClpP subunits assemble into 2 heptameric rings which stack back to back to give a disk-like structure with a central cavity, resembling the structure of eukaryotic proteasomes.

The protein resides in the cytoplasm. It carries out the reaction Hydrolysis of proteins to small peptides in the presence of ATP and magnesium. alpha-casein is the usual test substrate. In the absence of ATP, only oligopeptides shorter than five residues are hydrolyzed (such as succinyl-Leu-Tyr-|-NHMec, and Leu-Tyr-Leu-|-Tyr-Trp, in which cleavage of the -Tyr-|-Leu- and -Tyr-|-Trp bonds also occurs).. Cleaves peptides in various proteins in a process that requires ATP hydrolysis. Has a chymotrypsin-like activity. Plays a major role in the degradation of misfolded proteins. This is ATP-dependent Clp protease proteolytic subunit 3 from Trichormus variabilis (strain ATCC 29413 / PCC 7937) (Anabaena variabilis).